We begin with the raw amino-acid sequence, 165 residues long: uncharacterized protein (165 aa).

Residues 1–17 (MIRGFFLILLFLLLAFF) form the signal peptide.

This is an uncharacterized protein from Aquifex aeolicus (strain VF5).